Here is a 226-residue protein sequence, read N- to C-terminus: Cytidylate kinase (226 aa).

11–19 contacts ATP; that stretch reads GPAAAGKST.

This sequence belongs to the cytidylate kinase family. Type 1 subfamily.

The protein resides in the cytoplasm. It catalyses the reaction CMP + ATP = CDP + ADP. The enzyme catalyses dCMP + ATP = dCDP + ADP. The chain is Cytidylate kinase from Bacillus licheniformis (strain ATCC 14580 / DSM 13 / JCM 2505 / CCUG 7422 / NBRC 12200 / NCIMB 9375 / NCTC 10341 / NRRL NRS-1264 / Gibson 46).